The primary structure comprises 314 residues: DNA oxidative demethylase ALKBH2 (314 aa).

Polar residues predominate over residues 1–28 (MTNPLNSTAANRSNQPSSDGISDGQITN). The interval 1-75 (MTNPLNSTAA…KRFHYHQDQR (75 aa)) is disordered. Basic and acidic residues predominate over residues 57–75 (NGKDDSDTKKRFHYHQDQR). Residues Trp132 and 160–163 (ALVY) each bind substrate. Residues 194–314 (RFNSLLLNRY…RINLTFRLVL (121 aa)) form the Fe2OG dioxygenase domain. A 2-oxoglutarate-binding site is contributed by 201-203 (NRY). Fe cation contacts are provided by His213 and Asp215. Asp216 contacts substrate. Positions 242–271 (KKDEESSQGKTGDSGPAKKRLKRSSREDQQ) are disordered. Residue His293 coordinates Fe cation. 2-oxoglutarate is bound by residues Arg305 and 305–311 (RINLTFR).

This sequence belongs to the alkB family. Fe(2+) is required as a cofactor. In terms of tissue distribution, expressed ubiquitously, including in seedlings, leaves and flowers.

The protein resides in the nucleus. It carries out the reaction a methylated nucleobase within DNA + 2-oxoglutarate + O2 = a nucleobase within DNA + formaldehyde + succinate + CO2. Dioxygenase that repairs alkylated DNA containing 1-methyladenine and 1-ethenoadenine by oxidative demethylation. Accepts double-stranded and single-stranded substrates, with a preference for dsDNA over ssDNA. Confers resistance to methylating agents such as methylmethanesulphonate (MMS). The protein is DNA oxidative demethylase ALKBH2 (ALKBH2) of Arabidopsis thaliana (Mouse-ear cress).